Here is a 119-residue protein sequence, read N- to C-terminus: Ribosome-binding factor A (119 aa).

This sequence belongs to the RbfA family. In terms of assembly, monomer. Binds 30S ribosomal subunits, but not 50S ribosomal subunits or 70S ribosomes.

It localises to the cytoplasm. In terms of biological role, one of several proteins that assist in the late maturation steps of the functional core of the 30S ribosomal subunit. Associates with free 30S ribosomal subunits (but not with 30S subunits that are part of 70S ribosomes or polysomes). Required for efficient processing of 16S rRNA. May interact with the 5'-terminal helix region of 16S rRNA. This is Ribosome-binding factor A from Chlorobium limicola (strain DSM 245 / NBRC 103803 / 6330).